A 248-amino-acid chain; its full sequence is 1-(5-phosphoribosyl)-5-[(5-phosphoribosylamino)methylideneamino] imidazole-4-carboxamide isomerase (248 aa).

The active-site Proton acceptor is the Asp-8. Asp-131 acts as the Proton donor in catalysis.

Belongs to the HisA/HisF family.

The protein localises to the cytoplasm. The catalysed reaction is 1-(5-phospho-beta-D-ribosyl)-5-[(5-phospho-beta-D-ribosylamino)methylideneamino]imidazole-4-carboxamide = 5-[(5-phospho-1-deoxy-D-ribulos-1-ylimino)methylamino]-1-(5-phospho-beta-D-ribosyl)imidazole-4-carboxamide. The protein operates within amino-acid biosynthesis; L-histidine biosynthesis; L-histidine from 5-phospho-alpha-D-ribose 1-diphosphate: step 4/9. The sequence is that of 1-(5-phosphoribosyl)-5-[(5-phosphoribosylamino)methylideneamino] imidazole-4-carboxamide isomerase from Cupriavidus pinatubonensis (strain JMP 134 / LMG 1197) (Cupriavidus necator (strain JMP 134)).